A 232-amino-acid polypeptide reads, in one-letter code: Large ribosomal subunit protein uL1 (232 aa).

Belongs to the universal ribosomal protein uL1 family. Part of the 50S ribosomal subunit.

Binds directly to 23S rRNA. The L1 stalk is quite mobile in the ribosome, and is involved in E site tRNA release. Functionally, protein L1 is also a translational repressor protein, it controls the translation of the L11 operon by binding to its mRNA. The chain is Large ribosomal subunit protein uL1 from Clostridium novyi (strain NT).